The chain runs to 762 residues: Probable inorganic carbon transporter subunit DabA (762 aa).

Zn(2+) contacts are provided by Cys-279, Asp-281, His-461, and Cys-476.

The protein belongs to the inorganic carbon transporter (TC 9.A.2) DabA family. In terms of assembly, forms a complex with DabB. Zn(2+) serves as cofactor.

The protein localises to the cell inner membrane. In terms of biological role, part of an energy-coupled inorganic carbon pump. The polypeptide is Probable inorganic carbon transporter subunit DabA (Legionella pneumophila subsp. pneumophila (strain Philadelphia 1 / ATCC 33152 / DSM 7513)).